The chain runs to 589 residues: Splicing factor U2af large subunit B (589 aa).

The interval 1-195 is disordered; that stretch reads MMSYEGNGDG…KRRSGFDMAP (195 aa). A compositionally biased stretch (polar residues) spans 14–27; that stretch reads STENHNENYISLES. Composition is skewed to basic and acidic residues over residues 29–100 and 109–145; these read PFHE…DRQR and RDRS…DREV. 2 stretches are compositionally biased toward basic residues: residues 146–156 and 164–188; these read RHRRRSRSRSR and RSEH…SKRR. 3 consecutive RRM domains span residues 255–338, 375–453, and 494–580; these read RRVY…RPTD, DRIF…RAIQ, and QVVT…YPED.

Belongs to the splicing factor SR family. As to quaternary structure, component of the spliceosome. Interacts with SF1 in the nucleus.

The protein resides in the nucleus. It is found in the nucleus speckle. Its function is as follows. Necessary for the splicing of pre-mRNA. The polypeptide is Splicing factor U2af large subunit B (Arabidopsis thaliana (Mouse-ear cress)).